The primary structure comprises 157 residues: Crossover junction endodeoxyribonuclease RuvC (157 aa).

Active-site residues include Asp7, Glu66, and Asp139. Positions 7, 66, and 139 each coordinate Mg(2+).

This sequence belongs to the RuvC family. As to quaternary structure, homodimer which binds Holliday junction (HJ) DNA. The HJ becomes 2-fold symmetrical on binding to RuvC with unstacked arms; it has a different conformation from HJ DNA in complex with RuvA. In the full resolvosome a probable DNA-RuvA(4)-RuvB(12)-RuvC(2) complex forms which resolves the HJ. The cofactor is Mg(2+).

Its subcellular location is the cytoplasm. The catalysed reaction is Endonucleolytic cleavage at a junction such as a reciprocal single-stranded crossover between two homologous DNA duplexes (Holliday junction).. Functionally, the RuvA-RuvB-RuvC complex processes Holliday junction (HJ) DNA during genetic recombination and DNA repair. Endonuclease that resolves HJ intermediates. Cleaves cruciform DNA by making single-stranded nicks across the HJ at symmetrical positions within the homologous arms, yielding a 5'-phosphate and a 3'-hydroxyl group; requires a central core of homology in the junction. The consensus cleavage sequence is 5'-(A/T)TT(C/G)-3'. Cleavage occurs on the 3'-side of the TT dinucleotide at the point of strand exchange. HJ branch migration catalyzed by RuvA-RuvB allows RuvC to scan DNA until it finds its consensus sequence, where it cleaves and resolves the cruciform DNA. This is Crossover junction endodeoxyribonuclease RuvC from Helicobacter pylori (strain J99 / ATCC 700824) (Campylobacter pylori J99).